The chain runs to 310 residues: p-hydroxybenzoic acid efflux pump subunit AaeA (310 aa).

Residues 12 to 32 (AITVALVILAFIAISRAWVFY) form a helical membrane-spanning segment.

Belongs to the membrane fusion protein (MFP) (TC 8.A.1) family.

The protein localises to the cell inner membrane. Its function is as follows. Forms an efflux pump with AaeB. This is p-hydroxybenzoic acid efflux pump subunit AaeA from Enterobacter sp. (strain 638).